A 379-amino-acid polypeptide reads, in one-letter code: Probable leucine aminopeptidase TRV_05286 (379 aa).

The signal sequence occupies residues Met1–Ala18. Zn(2+) is bound by residues His182 and Asp201. Residues Asn202 and Asn226 are each glycosylated (N-linked (GlcNAc...) asparagine). Zn(2+)-binding residues include Glu240 and Asp267. Cys312 and Cys316 are oxidised to a cystine. His345 is a Zn(2+) binding site.

The protein belongs to the peptidase M28 family. M28E subfamily. Monomer. It depends on Zn(2+) as a cofactor.

It localises to the secreted. In terms of biological role, probable extracellular aminopeptidase which contributes to pathogenicity. This chain is Probable leucine aminopeptidase TRV_05286, found in Trichophyton verrucosum (strain HKI 0517).